Consider the following 64-residue polypeptide: MERRTLLVVLLVCSCVVAAAAEASPSRWPSPGRPRPFPGRPKPIFRPRPCNCYAPPCPCDRWRH.

An N-terminal signal peptide occupies residues Met1–Pro25. Residues Glu22 to Pro43 are disordered. The interval Ser26–Arg48 is pro/Arg-rich region responsible for antibacterial and antifungal activity. The segment covering Pro31–Pro43 has biased composition (pro residues). Residues Pro49 to Trp62 are cystein-containing C-terminal region important for stability but not essential for antimicrobial activity. 2 cysteine pairs are disulfide-bonded: Cys50–Cys59 and Cys52–Cys57. A propeptide spanning residues Arg63 to His64 is cleaved from the precursor.

As to quaternary structure, interacts with chitin through the N-terminal region (26-48). This interaction may be important, since chitin is a component of the fungal cell wall, as well as of the crab exoskeleton (permitting a possible action of arasin in wound healing in case of lesions). Post-translationally, disulfide bonds are important for activity especially against Gram-negative bacteria, since the linearization of the peptide causes a strong decrease of activity on these bacteria. As to expression, mainly expressed in hemocytes. No or very low expression in heart, gills, inestines, and epidermis.

Functionally, antimicrobial peptide that has a large activity spectrum with activity against Gram-positive, Gram-negative bacteria, as well as against fungi. Shows activity at micromolar concentrations. Displays minimal inhibitory concentration (MIC) values lower than minimal bactericidal concentrations (MBC). Synthetic peptides with similar activities than the full length peptide (composed of the first 23 or 25 amino acids (Arasin 1(26-48) or Arasin 1(26-50))) may have a dual mode of action depending on the peptide concentrations. At MIC concentrations, the peptide penetrates into the cytoplasm of target cells (tested on the Gram-negative E.coli). The two inner membrane proteins YgdD and SbmA may be required for this uptake. At concentrations higher than MIC, arasin may act by disrupting membranes. Full-length and N-terminal peptides do not show hemolytic activity. The sequence is that of Arasin 1 from Hyas araneus (Atlantic lyre crab).